A 270-amino-acid polypeptide reads, in one-letter code: tRNA pseudouridine synthase A (270 aa).

The active-site Nucleophile is the D51. Y109 serves as a coordination point for substrate.

The protein belongs to the tRNA pseudouridine synthase TruA family. In terms of assembly, homodimer.

The catalysed reaction is uridine(38/39/40) in tRNA = pseudouridine(38/39/40) in tRNA. Functionally, formation of pseudouridine at positions 38, 39 and 40 in the anticodon stem and loop of transfer RNAs. The chain is tRNA pseudouridine synthase A from Burkholderia thailandensis (strain ATCC 700388 / DSM 13276 / CCUG 48851 / CIP 106301 / E264).